The following is a 446-amino-acid chain: Eukaryotic translation initiation factor 2 subunit gamma (446 aa).

The tr-type G domain maps to 21–227; it reads QATINIGTIG…YIVKKIPIPV (207 aa). A G1 region spans residues 30–37; sequence GHVAHGKS. GTP is bound at residue 33 to 38; it reads AHGKST. The segment at 58–62 is G2; sequence NITIK. A G3 region spans residues 114-117; it reads DCPG. GTP is bound by residues 170–173 and 205–207; these read NKVD and SAQ. The tract at residues 170-173 is G4; it reads NKVD. A G5 region spans residues 205–207; sequence SAQ. Positions 436-446 are interacts with cdc123; it reads AKVVEGKTLKV.

The protein belongs to the TRAFAC class translation factor GTPase superfamily. Classic translation factor GTPase family. EIF2G subfamily. Eukaryotic translation initiation factor 2 eIF2 is a heterotrimeric complex composed of an alpha, a beta and a gamma subunit. The factors eIF-1, eIF-2, eIF-3, TIF5/eIF-5 and methionyl-tRNAi form a multifactor complex (MFC) that may bind to the 40S ribosome. Interacts with cdc123; the interaction is direct.

It localises to the cytoplasm. It is found in the cytosol. The catalysed reaction is GTP + H2O = GDP + phosphate + H(+). Its function is as follows. As a subunit of eukaryotic initiation factor 2 eIF2, involved in the early steps of protein synthesis. In the presence of GTP, eIF-2 forms a ternary complex with initiator tRNA Met-tRNAi and then recruits the 40S ribosomal complex and initiation factors eIF-1, eIF-1A and eIF-3 to form the 43S pre-initiation complex (43S PIC), a step that determines the rate of protein translation. The 43S PIC binds to mRNA and scans downstream to the initiation codon, where it forms a 48S initiation complex by codon-anticodon base pairing. This leads to the displacement of eIF-1 to allow GTPase-activating protein (GAP) eIF-5-mediated hydrolysis of eIF2-bound GTP. Hydrolysis of GTP and release of Pi, which makes GTP hydrolysis irreversible, causes the release of the eIF-2-GDP binary complex from the 40S subunit, an event that is essential for the subsequent joining of the 60S ribosomal subunit to form an elongation-competent 80S ribosome. In order for eIF-2 to recycle and catalyze another round of initiation, the GDP bound to eIF-2 must be exchanged with GTP by way of a reaction catalyzed by GDP-GTP exchange factor (GEF) eIF-2B. The sequence is that of Eukaryotic translation initiation factor 2 subunit gamma (tif213) from Schizosaccharomyces pombe (strain 972 / ATCC 24843) (Fission yeast).